A 1277-amino-acid polypeptide reads, in one-letter code: Protein FAM83H (1277 aa).

Residues 1-12 (MARRSQSSSQGE) show a composition bias toward polar residues. Disordered regions lie at residues 1–20 (MARR…PNYL), 67–98 (SLQR…SGTY), 717–756 (FGST…TNPL), 772–805 (SKLE…TGRT), 971–1018 (EQTS…NSAF), 1070–1130 (KAEE…SRLS), 1158–1225 (QKNR…RDIL), and 1247–1266 (KKDE…AGKI). A compositionally biased stretch (basic and acidic residues) spans 724–750 (SVEKAKENPPAEKEKEEGLLSRHDSFR). Polar residues-rich tracts occupy residues 777–805 (HTST…TGRT), 971–982 (EQTSSTIQTIGN), 993–1015 (SGPT…TRPN), and 1112–1130 (KSLS…SRLS). Low complexity predominate over residues 1204 to 1215 (SFLSRSRFSRPS). The span at 1247 to 1263 (KKDEQPSHADDNDDKKA) shows a compositional bias: basic and acidic residues.

This sequence belongs to the FAM83 family.

The protein resides in the cytoplasm. Its subcellular location is the cytoskeleton. Functionally, may play a role in keratin cytoskeleton disassembly. This is Protein FAM83H from Xenopus tropicalis (Western clawed frog).